The sequence spans 515 residues: Probable cytochrome P450 4p3 (515 aa).

Heme-binding residues include Glu-322 and Cys-461.

It belongs to the cytochrome P450 family. Requires heme as cofactor.

Its subcellular location is the endoplasmic reticulum membrane. It localises to the microsome membrane. In terms of biological role, may be involved in the metabolism of insect hormones and in the breakdown of synthetic insecticides. This Drosophila melanogaster (Fruit fly) protein is Probable cytochrome P450 4p3 (Cyp4p3).